Here is a 352-residue protein sequence, read N- to C-terminus: MSDSPVTLPESIKLTEYSHGAGCGCKISPKVLSTILASQLPVFTDPNLLVGNQSRDDAAVYKLNDEIGIISTTDFFMPIVDDPFTFGRIAATNAISDIYAMGGTPIMAIAILGWPINKLPAEIAQQVVDGGRQACMEAGIMLAGGHSIDAPEPIFGLAVTGQIALSDLKQNDTAKKGDRLYLTKPIGIGILTTAQKQKKLHDEDSLIAVNAMCQLNTIGATIAKISGVNALTDVTGFGLAGHLLEMCQGANLTAKLKFDAVPLLPRALDYLALGCVPGGTHRNYDSYGEHLPELSEHQKAILCDPQTSGGLLVAVSAAAEAELIALLDANHITPICIGSLETPTTQANVVLC.

C23 is a catalytic residue. ATP-binding positions include K26 and 54-56 (SRD). D57 is a Mg(2+) binding site. ATP contacts are provided by residues D74, D97, and 145–147 (GHS). Position 97 (D97) interacts with Mg(2+). A Mg(2+)-binding site is contributed by D233.

The protein belongs to the selenophosphate synthase 1 family. Class I subfamily. Homodimer. Mg(2+) is required as a cofactor.

It carries out the reaction hydrogenselenide + ATP + H2O = selenophosphate + AMP + phosphate + 2 H(+). In terms of biological role, synthesizes selenophosphate from selenide and ATP. The sequence is that of Selenide, water dikinase from Shewanella putrefaciens (strain CN-32 / ATCC BAA-453).